Reading from the N-terminus, the 349-residue chain is Heat-inducible transcription repressor HrcA (349 aa).

It belongs to the HrcA family.

Functionally, negative regulator of class I heat shock genes (grpE-dnaK-dnaJ and groELS operons). Prevents heat-shock induction of these operons. In Xylella fastidiosa (strain M23), this protein is Heat-inducible transcription repressor HrcA.